The chain runs to 388 residues: S-adenosylmethionine synthase (388 aa).

His16 is an ATP binding site. Asp18 is a Mg(2+) binding site. Glu44 contacts K(+). The L-methionine site is built by Glu57 and Gln100. The segment at 100–110 (QSPEIAQGVDR) is flexible loop. ATP-binding positions include 165 to 167 (DAK), 231 to 232 (KF), Asp240, 246 to 247 (RK), Ala263, and Lys267. Asp240 contributes to the L-methionine binding site. L-methionine is bound at residue Lys271.

The protein belongs to the AdoMet synthase family. In terms of assembly, homotetramer; dimer of dimers. Requires Mg(2+) as cofactor. The cofactor is K(+).

The protein resides in the cytoplasm. The enzyme catalyses L-methionine + ATP + H2O = S-adenosyl-L-methionine + phosphate + diphosphate. Its pathway is amino-acid biosynthesis; S-adenosyl-L-methionine biosynthesis; S-adenosyl-L-methionine from L-methionine: step 1/1. Catalyzes the formation of S-adenosylmethionine (AdoMet) from methionine and ATP. The overall synthetic reaction is composed of two sequential steps, AdoMet formation and the subsequent tripolyphosphate hydrolysis which occurs prior to release of AdoMet from the enzyme. In Psychrobacter arcticus (strain DSM 17307 / VKM B-2377 / 273-4), this protein is S-adenosylmethionine synthase.